A 278-amino-acid chain; its full sequence is MKNWRLNNVTPSAFEKTGPIPRSITKTFEKFKKELDPNSESEVIEEFRVSRYQTAASIKYLLLLITVPLIVNQISKSFVFSPFVDYFWNDNQNDIFLNESQEERAFSELQRFEEKIHFEILIGQSPPLSQESIDKEIKHKAVELAQYYVQESTDAMKNLLADVLAFVTFVYLIVTGRRQISVLKSFVNELIYGLSDTAKAFLIILFTDIFVGFHSTHGWEVVLENGLRHFGLPENRDLIFLFIATFPVVLDTVFKYWIFRYLNQVSPSAVATYKDMNE.

The next 4 helical transmembrane spans lie at 60 to 80 (YLLLLITVPLIVNQISKSFVF), 155 to 175 (AMKNLLADVLAFVTFVYLIVT), 201 to 221 (FLIILFTDIFVGFHSTHGWEV), and 239 to 259 (IFLFIATFPVVLDTVFKYWIF).

The protein belongs to the CemA family.

It is found in the plastid. The protein localises to the chloroplast inner membrane. It catalyses the reaction K(+)(in) + H(+)(out) = K(+)(out) + H(+)(in). Functionally, contributes to K(+)/H(+) antiport activity by supporting proton efflux to control proton extrusion and homeostasis in chloroplasts in a light-dependent manner to modulate photosynthesis. Prevents excessive induction of non-photochemical quenching (NPQ) under continuous-light conditions. Indirectly promotes efficient inorganic carbon uptake into chloroplasts. This is Potassium/proton antiporter CemA from Rhodomonas salina (Cryptomonas salina).